We begin with the raw amino-acid sequence, 155 residues long: SsrA-binding protein (155 aa).

Residues 135 to 147 (TIKRRDQERDIKK) show a composition bias toward basic and acidic residues. The tract at residues 135-155 (TIKRRDQERDIKKQMKHYNAR) is disordered.

It belongs to the SmpB family.

The protein localises to the cytoplasm. Required for rescue of stalled ribosomes mediated by trans-translation. Binds to transfer-messenger RNA (tmRNA), required for stable association of tmRNA with ribosomes. tmRNA and SmpB together mimic tRNA shape, replacing the anticodon stem-loop with SmpB. tmRNA is encoded by the ssrA gene; the 2 termini fold to resemble tRNA(Ala) and it encodes a 'tag peptide', a short internal open reading frame. During trans-translation Ala-aminoacylated tmRNA acts like a tRNA, entering the A-site of stalled ribosomes, displacing the stalled mRNA. The ribosome then switches to translate the ORF on the tmRNA; the nascent peptide is terminated with the 'tag peptide' encoded by the tmRNA and targeted for degradation. The ribosome is freed to recommence translation, which seems to be the essential function of trans-translation. This Streptococcus pyogenes serotype M6 (strain ATCC BAA-946 / MGAS10394) protein is SsrA-binding protein.